A 55-amino-acid polypeptide reads, in one-letter code: MFNIYLENAFYLNGITFAKLPEAYSIFDPIVDVMPIIPLFFFLLAFVWQASVSFR.

Residues 1-18 (MFNIYLENAFYLNGITFA) constitute a propeptide that is removed on maturation. A helical membrane pass occupies residues 26–46 (IFDPIVDVMPIIPLFFFLLAF).

The protein belongs to the PsbK family. PSII is composed of 1 copy each of membrane proteins PsbA, PsbB, PsbC, PsbD, PsbE, PsbF, PsbH, PsbI, PsbJ, PsbK, PsbL, PsbM, PsbT, PsbX, PsbY, PsbZ, Psb30/Ycf12, at least 3 peripheral proteins of the oxygen-evolving complex and a large number of cofactors. It forms dimeric complexes.

The protein localises to the plastid. Its subcellular location is the chloroplast thylakoid membrane. In terms of biological role, one of the components of the core complex of photosystem II (PSII). PSII is a light-driven water:plastoquinone oxidoreductase that uses light energy to abstract electrons from H(2)O, generating O(2) and a proton gradient subsequently used for ATP formation. It consists of a core antenna complex that captures photons, and an electron transfer chain that converts photonic excitation into a charge separation. This is Photosystem II reaction center protein K from Marchantia polymorpha (Common liverwort).